We begin with the raw amino-acid sequence, 149 residues long: D-aminoacyl-tRNA deacylase (149 aa).

Positions G137 to P138 match the Gly-cisPro motif, important for rejection of L-amino acids motif.

Belongs to the DTD family. In terms of assembly, homodimer.

It is found in the cytoplasm. The catalysed reaction is glycyl-tRNA(Ala) + H2O = tRNA(Ala) + glycine + H(+). The enzyme catalyses a D-aminoacyl-tRNA + H2O = a tRNA + a D-alpha-amino acid + H(+). Its function is as follows. An aminoacyl-tRNA editing enzyme that deacylates mischarged D-aminoacyl-tRNAs. Also deacylates mischarged glycyl-tRNA(Ala), protecting cells against glycine mischarging by AlaRS. Acts via tRNA-based rather than protein-based catalysis; rejects L-amino acids rather than detecting D-amino acids in the active site. By recycling D-aminoacyl-tRNA to D-amino acids and free tRNA molecules, this enzyme counteracts the toxicity associated with the formation of D-aminoacyl-tRNA entities in vivo and helps enforce protein L-homochirality. In Alkaliphilus metalliredigens (strain QYMF), this protein is D-aminoacyl-tRNA deacylase.